A 335-amino-acid polypeptide reads, in one-letter code: tRNA N6-adenosine threonylcarbamoyltransferase (335 aa).

Fe cation-binding residues include His111 and His115. Substrate is bound by residues Ile133–Gly137, Asp166, Gly179, Asp183, and Asn268. Asp296 contributes to the Fe cation binding site.

The protein belongs to the KAE1 / TsaD family. Fe(2+) serves as cofactor.

The protein localises to the cytoplasm. It catalyses the reaction L-threonylcarbamoyladenylate + adenosine(37) in tRNA = N(6)-L-threonylcarbamoyladenosine(37) in tRNA + AMP + H(+). Functionally, required for the formation of a threonylcarbamoyl group on adenosine at position 37 (t(6)A37) in tRNAs that read codons beginning with adenine. Is involved in the transfer of the threonylcarbamoyl moiety of threonylcarbamoyl-AMP (TC-AMP) to the N6 group of A37, together with TsaE and TsaB. TsaD likely plays a direct catalytic role in this reaction. The protein is tRNA N6-adenosine threonylcarbamoyltransferase of Aquifex aeolicus (strain VF5).